Consider the following 344-residue polypeptide: Anthranilate phosphoribosyltransferase (344 aa).

5-phospho-alpha-D-ribose 1-diphosphate contacts are provided by residues glycine 84, 87-88 (GD), threonine 92, 94-97 (NIST), 112-120 (KHGNRSVSS), and serine 124. Glycine 84 contacts anthranilate. Position 96 (serine 96) interacts with Mg(2+). Anthranilate is bound at residue asparagine 115. An anthranilate-binding site is contributed by arginine 170. Aspartate 229 and glutamate 230 together coordinate Mg(2+).

The protein belongs to the anthranilate phosphoribosyltransferase family. As to quaternary structure, homodimer. Requires Mg(2+) as cofactor.

It catalyses the reaction N-(5-phospho-beta-D-ribosyl)anthranilate + diphosphate = 5-phospho-alpha-D-ribose 1-diphosphate + anthranilate. It participates in amino-acid biosynthesis; L-tryptophan biosynthesis; L-tryptophan from chorismate: step 2/5. In terms of biological role, catalyzes the transfer of the phosphoribosyl group of 5-phosphorylribose-1-pyrophosphate (PRPP) to anthranilate to yield N-(5'-phosphoribosyl)-anthranilate (PRA). The protein is Anthranilate phosphoribosyltransferase of Xylella fastidiosa (strain M23).